The sequence spans 465 residues: Sushi repeat-containing protein SRPX2 (465 aa).

The N-terminal stretch at 1–23 (MASQLTQRGALFLLFFLTPAVTP) is a signal peptide. 3 Sushi domains span residues 69–119 (ATCY…YCRQ), 120–178 (MRCH…VCVD), and 262–321 (RRCP…ICAP). 4 disulfides stabilise this stretch: cysteine 71–cysteine 105, cysteine 91–cysteine 117, cysteine 122–cysteine 163, and cysteine 149–cysteine 176. Residues 177–261 (VDIDPPKIRC…SCKFIVKVQV (85 aa)) enclose the HYR domain. Cystine bridges form between cysteine 264-cysteine 306 and cysteine 292-cysteine 319.

As to quaternary structure, forms homooligomers. Interacts with PLAUR (via the UPAR/Ly6 domains), ADAMTS4 and CTSB. Interacts with HGF; the interaction increases the mitogenic activity of HGF. In terms of processing, contains chondroitin sulfate chains. Expressed in neurons of the rolandic area of the brain (at protein level). Highly expressed in the brain, placenta, lung, trachea, uterus, adrenal gland, heart, ovary and placenta. Weakly expressed in the peripheral blood, brain and bone marrow. Expressed in numerous cancer cell lines and in gastrointestinal cancer cells. Higher levels found in colorectal cancers than in normal colonic mucosa.

The protein localises to the secreted. It localises to the cytoplasm. It is found in the cell surface. Its subcellular location is the synapse. Its function is as follows. Acts as a ligand for the urokinase plasminogen activator surface receptor. Plays a role in angiogenesis by inducing endothelial cell migration and the formation of vascular network (cords). Involved in cellular migration and adhesion. Increases the phosphorylation levels of FAK. Interacts with and increases the mitogenic activity of HGF. Promotes synapse formation. May have a role in the perisylvian region, critical for language and cognitive development. The protein is Sushi repeat-containing protein SRPX2 (SRPX2) of Homo sapiens (Human).